The primary structure comprises 231 residues: Ribosomal RNA large subunit methyltransferase E (231 aa).

S-adenosyl-L-methionine-binding residues include Gly-76, Trp-78, Asp-99, Asp-115, and Asp-139. Lys-179 acts as the Proton acceptor in catalysis.

The protein belongs to the class I-like SAM-binding methyltransferase superfamily. RNA methyltransferase RlmE family.

It localises to the cytoplasm. It catalyses the reaction uridine(2552) in 23S rRNA + S-adenosyl-L-methionine = 2'-O-methyluridine(2552) in 23S rRNA + S-adenosyl-L-homocysteine + H(+). Specifically methylates the uridine in position 2552 of 23S rRNA at the 2'-O position of the ribose in the fully assembled 50S ribosomal subunit. The chain is Ribosomal RNA large subunit methyltransferase E from Bradyrhizobium sp. (strain BTAi1 / ATCC BAA-1182).